Here is a 378-residue protein sequence, read N- to C-terminus: Dihydroorotate dehydrogenase (quinone) (378 aa).

FMN contacts are provided by residues 77–81 and T101; that span reads AGFDK. K81 serves as a coordination point for substrate. 126-130 lines the substrate pocket; the sequence is NRMGF. N158 and N191 together coordinate FMN. Substrate is bound at residue N191. S194 functions as the Nucleophile in the catalytic mechanism. N196 contacts substrate. 2 residues coordinate FMN: K229 and T257. 258 to 259 provides a ligand contact to substrate; it reads NT. Residues G287, G316, and 337–338 contribute to the FMN site; that span reads YT.

It belongs to the dihydroorotate dehydrogenase family. Type 2 subfamily. Monomer. The cofactor is FMN.

It localises to the cell membrane. It carries out the reaction (S)-dihydroorotate + a quinone = orotate + a quinol. The protein operates within pyrimidine metabolism; UMP biosynthesis via de novo pathway; orotate from (S)-dihydroorotate (quinone route): step 1/1. In terms of biological role, catalyzes the conversion of dihydroorotate to orotate with quinone as electron acceptor. The sequence is that of Dihydroorotate dehydrogenase (quinone) from Synechococcus elongatus (strain ATCC 33912 / PCC 7942 / FACHB-805) (Anacystis nidulans R2).